Consider the following 245-residue polypeptide: Ribosomal RNA large subunit methyltransferase E (245 aa).

Positions Met1 to Lys25 are disordered. Positions Ser11–Lys25 are enriched in basic residues. Gly81, Trp83, Asp104, Asp120, and Asp144 together coordinate S-adenosyl-L-methionine. The active-site Proton acceptor is Lys184.

The protein belongs to the class I-like SAM-binding methyltransferase superfamily. RNA methyltransferase RlmE family.

Its subcellular location is the cytoplasm. It catalyses the reaction uridine(2552) in 23S rRNA + S-adenosyl-L-methionine = 2'-O-methyluridine(2552) in 23S rRNA + S-adenosyl-L-homocysteine + H(+). In terms of biological role, specifically methylates the uridine in position 2552 of 23S rRNA at the 2'-O position of the ribose in the fully assembled 50S ribosomal subunit. This is Ribosomal RNA large subunit methyltransferase E from Rhizobium meliloti (strain 1021) (Ensifer meliloti).